A 319-amino-acid chain; its full sequence is Taste receptor type 2 member 39 (319 aa).

Over 1–16 (MAQPSNYWKQDVLPLS) the chain is Extracellular. Residues 17–37 (ILMLTLVATECTIGIIASGIV) traverse the membrane as a helical segment. The Cytoplasmic segment spans residues 38–65 (MAVNAVSWVQKKAISITTRILLLLSVSR). The helical transmembrane segment at 66–86 (IGLQSIMLIEITSSIFNVAFY) threads the bilayer. Topologically, residues 87-97 (NSVLYRVSNVS) are extracellular. A glycan (N-linked (GlcNAc...) asparagine) is linked at Asn95. The chain crosses the membrane as a helical span at residues 98–118 (FVFLNYCSLWFAALLSFFHFV). At 119 to 137 (KIANFSYPLFFKLKWRISE) the chain is on the cytoplasmic side. The helical transmembrane segment at 138-158 (LMPWLLWLSVFISFSSSMFFS) threads the bilayer. The Extracellular segment spans residues 159–194 (KHKFTVNNNNSLSNNICNFTMKLYVVETNVVNVSFL). N-linked (GlcNAc...) asparagine glycans are attached at residues Asn167, Asn176, and Asn190. The helical transmembrane segment at 195 to 215 (FISGILPPLTMFVATATLLIF) threads the bilayer. Over 216–247 (SLRRHTLNMRNSATGSRNPCIEAHMQAIKETS) the chain is Cytoplasmic. Residues 248–268 (CFLFLYILNAAALLLSTSNIV) form a helical membrane-spanning segment. The Extracellular portion of the chain corresponds to 269–273 (DASLF). Residues 274-294 (WSIVIRIVLPVYPAGHSVLLI) traverse the membrane as a helical segment. Residues 295-319 (QNNPGLRRTWKHLQSQIHLYLQNRF) are Cytoplasmic-facing.

It belongs to the G-protein coupled receptor T2R family.

The protein resides in the membrane. Functionally, putative taste receptor which may play a role in the perception of bitterness. This Mus musculus (Mouse) protein is Taste receptor type 2 member 39 (Tas2r39).